The chain runs to 460 residues: GTPase Der (460 aa).

2 consecutive EngA-type G domains span residues 2 to 166 (KTIA…AEER) and 175 to 353 (TRIA…QERK). Residues 8–15 (GRPNVGKS), 55–59 (DTGGL), 118–121 (NKLD), 181–188 (GQPNAGKS), 228–232 (DTAGL), and 293–296 (NKID) contribute to the GTP site. One can recognise a KH-like domain in the interval 354-446 (KRIPTHRLTQ…LLWKWRKAEG (93 aa)).

Belongs to the TRAFAC class TrmE-Era-EngA-EngB-Septin-like GTPase superfamily. EngA (Der) GTPase family. As to quaternary structure, associates with the 50S ribosomal subunit.

Functionally, GTPase that plays an essential role in the late steps of ribosome biogenesis. The polypeptide is GTPase Der (Methylacidiphilum infernorum (isolate V4) (Methylokorus infernorum (strain V4))).